A 777-amino-acid polypeptide reads, in one-letter code: Ethylene receptor 4 (777 aa).

3 helical membrane passes run 49-69 (LLIAASFLSIPLELFYFATCA), 77-97 (AVLHFCAFIVLCGATHLLAAF), and 113-133 (AAKVLAAVASSAAAVSLLTFI). Residues Cys-88 and His-92 each coordinate Cu cation. Positions 184-344 (DAHAILRTTA…VVADQAAVAL (161 aa)) constitute a GAF domain. Residues 387–521 (AMCHAMRRPV…NTESGACRLS (135 aa)) form the Histidine kinase domain. His-390 bears the Phosphohistidine; by autocatalysis mark. In terms of domain architecture, Response regulatory spans 645–774 (RVLLADDDAM…ALGAQLCRVL (130 aa)). Asp-696 carries the post-translational modification 4-aspartylphosphate.

Belongs to the ethylene receptor family. It depends on Cu cation as a cofactor.

The protein localises to the endoplasmic reticulum membrane. The catalysed reaction is ATP + protein L-histidine = ADP + protein N-phospho-L-histidine.. Its function is as follows. Ethylene receptor related to bacterial two-component regulators. Acts as a redundant negative regulator of ethylene signaling. The protein is Ethylene receptor 4 of Oryza sativa subsp. indica (Rice).